Reading from the N-terminus, the 521-residue chain is Bifunctional purine biosynthesis protein PurH (521 aa).

The MGS-like domain occupies Met-1 to Val-145.

This sequence belongs to the PurH family.

The enzyme catalyses (6R)-10-formyltetrahydrofolate + 5-amino-1-(5-phospho-beta-D-ribosyl)imidazole-4-carboxamide = 5-formamido-1-(5-phospho-D-ribosyl)imidazole-4-carboxamide + (6S)-5,6,7,8-tetrahydrofolate. It carries out the reaction IMP + H2O = 5-formamido-1-(5-phospho-D-ribosyl)imidazole-4-carboxamide. The protein operates within purine metabolism; IMP biosynthesis via de novo pathway; 5-formamido-1-(5-phospho-D-ribosyl)imidazole-4-carboxamide from 5-amino-1-(5-phospho-D-ribosyl)imidazole-4-carboxamide (10-formyl THF route): step 1/1. It functions in the pathway purine metabolism; IMP biosynthesis via de novo pathway; IMP from 5-formamido-1-(5-phospho-D-ribosyl)imidazole-4-carboxamide: step 1/1. The protein is Bifunctional purine biosynthesis protein PurH of Paraburkholderia xenovorans (strain LB400).